The sequence spans 341 residues: Heterogeneous nuclear ribonucleoproteins A2/B1 (341 aa).

2 consecutive RRM domains span residues 9 to 92 and 100 to 179; these read RKLF…ESGK and KKLF…LSRQ. K10 is covalently cross-linked (Glycyl lysine isopeptide (Lys-Gly) (interchain with G-Cter in SUMO2)). Residue S17 is modified to Phosphoserine. R26 carries the post-translational modification Omega-N-methylarginine. S73 carries the phosphoserine modification. K92 carries the post-translational modification N6,N6-dimethyllysine; alternate. Residue K92 forms a Glycyl lysine isopeptide (Lys-Gly) (interchain with G-Cter in SUMO2); alternate linkage. Glycyl lysine isopeptide (Lys-Gly) (interchain with G-Cter in SUMO2) cross-links involve residues K100, K108, and K125. T128 carries the phosphothreonine modification. Phosphoserine is present on S137. K140 participates in a covalent cross-link: Glycyl lysine isopeptide (Lys-Gly) (interchain with G-Cter in SUMO2). Phosphothreonine is present on T147. Residues K156 and K161 each participate in a glycyl lysine isopeptide (Lys-Gly) (interchain with G-Cter in SUMO2); alternate cross-link. Residues K156 and K161 each carry the N6-acetyllysine; alternate modification. T164 bears the Phosphothreonine mark. K174 participates in a covalent cross-link: Glycyl lysine isopeptide (Lys-Gly) (interchain with G-Cter in SUMO2). 2 positions are modified to phosphoserine: S177 and S189. The tract at residues 181–341 is disordered; the sequence is MQEVQSSRSG…SGGYGGRSRY (161 aa). Gly residues predominate over residues 190 to 211; that stretch reads GRGGNFGFGDSRGGGGNFGPGP. R191 carries the post-translational modification Asymmetric dimethylarginine; alternate. Residue R191 is modified to Dimethylated arginine; alternate. R191 is subject to Omega-N-methylarginine; alternate. S200 is subject to Phosphoserine. R201 is subject to Asymmetric dimethylarginine; alternate. R201 carries the dimethylated arginine; alternate modification. Position 201 is an omega-N-methylarginine; alternate (R201). S213 bears the Phosphoserine mark. The residue at position 216 (R216) is an Omega-N-methylarginine. A phosphoserine mark is found at S219 and S224. Omega-N-methylarginine is present on R226. The residue at position 247 (S247) is a Phosphoserine. R254 is subject to Asymmetric dimethylarginine; alternate. R254 carries the post-translational modification Omega-N-methylarginine; alternate. Residues 296–335 form a nuclear targeting sequence region; it reads QQPSNYGPMKSGNFGGSRNMGGPYGGGNYGPGGSGGSGGY. The span at 308–341 shows a compositional bias: gly residues; it reads NFGGSRNMGGPYGGGNYGPGGSGGSGGYGGRSRY. S312 bears the Phosphoserine mark. Residue R313 is modified to Omega-N-methylarginine. At Y319 the chain carries Phosphotyrosine. Phosphoserine occurs at positions 329 and 332. Y335 carries the post-translational modification Phosphotyrosine. Position 338 is an omega-N-methylarginine (R338).

Identified in the spliceosome C complex. Identified in a IGF2BP1-dependent mRNP granule complex containing untranslated mRNAs. Interacts with IGF2BP1. Interacts with C9orf72. Interacts with DGCR8. Interacts with TARDBP. Interacts with CKAP5. Interacts with PPIA/CYPA. Interacts (via C-terminus) with FAM76B; the interaction results in retention of HNRNPA2B1 in the nucleus and inhibition of the NF-kappa-B-mediated inflammatory pathway. Interacts with NF-kappa-B inhibitors NFKBIA and NFKBIE; the interaction may be mediated by the RRM2 domain of HNRNPA2B1, and HNRNPA2B1 may interact simultaneously with FAM76B and either NFKBIA or NFKBIE to form a complex. Post-translationally, sumoylated in exosomes, promoting miRNAs-binding. Asymmetric dimethylation at Arg-254 constitutes the major methylation site. According to a report, methylation affects subcellular location and promotes nuclear localization. According to another report, methylation at Arg-254 does not influence nucleocytoplasmic shuttling.

It is found in the nucleus. The protein localises to the nucleoplasm. It localises to the cytoplasmic granule. The protein resides in the secreted. Its subcellular location is the extracellular exosome. Heterogeneous nuclear ribonucleoprotein (hnRNP) that associates with nascent pre-mRNAs, packaging them into hnRNP particles. The hnRNP particle arrangement on nascent hnRNA is non-random and sequence-dependent and serves to condense and stabilize the transcripts and minimize tangling and knotting. Packaging plays a role in various processes such as transcription, pre-mRNA processing, RNA nuclear export, subcellular location, mRNA translation and stability of mature mRNAs. Forms hnRNP particles with at least 20 other different hnRNP and heterogeneous nuclear RNA in the nucleus. Involved in transport of specific mRNAs to the cytoplasm in oligodendrocytes and neurons: acts by specifically recognizing and binding the A2RE (21 nucleotide hnRNP A2 response element) or the A2RE11 (derivative 11 nucleotide oligonucleotide) sequence motifs present on some mRNAs, and promotes their transport to the cytoplasm. Specifically binds single-stranded telomeric DNA sequences, protecting telomeric DNA repeat against endonuclease digestion. Also binds other RNA molecules, such as primary miRNA (pri-miRNAs): acts as a nuclear 'reader' of the N6-methyladenosine (m6A) mark by specifically recognizing and binding a subset of nuclear m6A-containing pri-miRNAs. Binding to m6A-containing pri-miRNAs promotes pri-miRNA processing by enhancing binding of DGCR8 to pri-miRNA transcripts. Involved in miRNA sorting into exosomes following sumoylation, possibly by binding (m6A)-containing pre-miRNAs. Acts as a regulator of efficiency of mRNA splicing, possibly by binding to m6A-containing pre-mRNAs. Plays a role in the splicing of pyruvate kinase PKM by binding repressively to sequences flanking PKM exon 9, inhibiting exon 9 inclusion and resulting in exon 10 inclusion and production of the PKM M2 isoform. This is Heterogeneous nuclear ribonucleoproteins A2/B1 (HNRNPA2B1) from Bos taurus (Bovine).